The sequence spans 146 residues: Ribosome maturation factor RimP (146 aa).

The protein belongs to the RimP family.

It is found in the cytoplasm. Its function is as follows. Required for maturation of 30S ribosomal subunits. This chain is Ribosome maturation factor RimP, found in Helicobacter pylori (strain G27).